A 251-amino-acid polypeptide reads, in one-letter code: Orotidine 5'-phosphate decarboxylase (251 aa).

Residues Asp-19, Lys-42, 69–78 (DLKFHDIPNT), Thr-133, Arg-194, Gln-204, Gly-224, and Arg-225 each bind substrate. Lys-71 serves as the catalytic Proton donor.

It belongs to the OMP decarboxylase family. Type 1 subfamily. In terms of assembly, homodimer.

The catalysed reaction is orotidine 5'-phosphate + H(+) = UMP + CO2. It participates in pyrimidine metabolism; UMP biosynthesis via de novo pathway; UMP from orotate: step 2/2. Catalyzes the decarboxylation of orotidine 5'-monophosphate (OMP) to uridine 5'-monophosphate (UMP). The sequence is that of Orotidine 5'-phosphate decarboxylase from Syntrophus aciditrophicus (strain SB).